Reading from the N-terminus, the 562-residue chain is Potassium voltage-gated channel subfamily V member 2 (562 aa).

The span at 1-10 (MLKQSNERRW) shows a compositional bias: basic and acidic residues. The interval 1 to 34 (MLKQSNERRWSLSYKPWSTPETEDVPNTGSNQHR) is disordered. Residues 1–163 (MLKQSNERRW…TDEYFFDRDP (163 aa)) lie on the Cytoplasmic side of the membrane. The helical transmembrane segment at 164–184 (AVFQLIYNFYTSGVLLVRDEL) threads the bilayer. The Extracellular portion of the chain corresponds to 185-269 (CPRSFLEELG…KPFSSVAAKA (85 aa)). The chain crosses the membrane as a helical span at residues 270-290 (MGVATNLFVLISVVALALNTV). Over 291–344 (EEMQHQAEQGTGGGDPRPILEHVEMLCVAFFTLEFLLRLASTPNLQRFARSALN) the chain is Cytoplasmic. Residues 345–365 (LVDLVAILPFYLQLLLECFTS) form a helical membrane-spanning segment. Topologically, residues 366–391 (EDQRHNKDSPREHDLETVGRVGKVGQ) are extracellular. Residues 392 to 412 (VLRIMRLMRIFRILKLARHST) form a helical; Voltage-sensor membrane-spanning segment. Over 413 to 427 (GLRAFGFTLRQCYQQ) the chain is Cytoplasmic. Residues 428-448 (VGCLMLFITMGIFSFSAAVYS) form a helical membrane-spanning segment. The Extracellular segment spans residues 449–461 (VEHDVPGTNFTSI). N-linked (GlcNAc...) asparagine glycosylation is present at Asn457. The pore-forming intramembrane region spans 462–482 (LHAWWWAAVSISTVGYGDMYP). A Selectivity filter motif is present at residues 474–479 (TVGYGD). The Extracellular portion of the chain corresponds to 483 to 488 (ETHLGR). Residues 489 to 509 (LFAFLCIAFGIILNGMPISIL) traverse the membrane as a helical segment. Residues 510–562 (YNKFSDYYSKLKAYEYTAIRRERGKVNFMQRATKKMAECLSESHAQSTTRQEN) are Cytoplasmic-facing.

This sequence belongs to the potassium channel family. V (TC 1.A.1.2) subfamily. Kv8.2/KCNV2 sub-subfamily. Heteromultimer with KCNB1, KCNC1 and KCNF1. Does not form homomultimers.

The protein resides in the cell membrane. Functionally, potassium channel subunit. Modulates channel activity by shifting the threshold and the half-maximal activation to more negative values. This is Potassium voltage-gated channel subfamily V member 2 (Kcnv2) from Mus musculus (Mouse).